The following is a 320-amino-acid chain: Endolytic peptidoglycan transglycosylase RlpA (320 aa).

The protein belongs to the RlpA family.

In terms of biological role, lytic transglycosylase with a strong preference for naked glycan strands that lack stem peptides. The sequence is that of Endolytic peptidoglycan transglycosylase RlpA from Rickettsia typhi (strain ATCC VR-144 / Wilmington).